Here is a 145-residue protein sequence, read N- to C-terminus: Large ribosomal subunit protein uL13 (145 aa).

It belongs to the universal ribosomal protein uL13 family. As to quaternary structure, part of the 50S ribosomal subunit.

Its function is as follows. This protein is one of the early assembly proteins of the 50S ribosomal subunit, although it is not seen to bind rRNA by itself. It is important during the early stages of 50S assembly. The polypeptide is Large ribosomal subunit protein uL13 (Bacillus mycoides (strain KBAB4) (Bacillus weihenstephanensis)).